A 148-amino-acid polypeptide reads, in one-letter code: Pivalyl-CoA mutase small subunit (148 aa).

The B12-binding domain occupies 8–138; it reads PLRVLVTKIG…TALGQKSRAE (131 aa). His21 is an adenosylcob(III)alamin binding site.

The protein belongs to the acyl-CoA mutase small subunit family. Monomer in the absence of the PCM large subunit. Weakly interacts with the PCM large subunit; an alpha(2)beta(2) stoichiometry seems to represent the active state of the enzyme. Adenosylcob(III)alamin is required as a cofactor.

It carries out the reaction 3-methylbutanoyl-CoA = 2,2-dimethylpropanoyl-CoA. In terms of biological role, together with Xaut_5043, catalyzes the reversible isomerization between pivalyl-CoA and isovaleryl-CoA, using radical chemistry. Does not exhibit isobutyryl-CoA mutase (ICM) activity. In Xanthobacter autotrophicus (strain ATCC BAA-1158 / Py2), this protein is Pivalyl-CoA mutase small subunit.